Here is a 315-residue protein sequence, read N- to C-terminus: Thioredoxin reductase (315 aa).

FAD is bound at residue 45 to 52; the sequence is EGSTPGGK. Cys145 and Cys148 are joined by a disulfide. An FAD-binding site is contributed by 288–297; that stretch reads DCRSKHFRQI.

This sequence belongs to the class-II pyridine nucleotide-disulfide oxidoreductase family. In terms of assembly, homodimer. It depends on FAD as a cofactor.

Its subcellular location is the cytoplasm. It catalyses the reaction [thioredoxin]-dithiol + NADP(+) = [thioredoxin]-disulfide + NADPH + H(+). The chain is Thioredoxin reductase (trxB) from Mycoplasma pneumoniae (strain ATCC 29342 / M129 / Subtype 1) (Mycoplasmoides pneumoniae).